An 833-amino-acid chain; its full sequence is Urease (833 aa).

One can recognise a Urease domain in the interval 395-833 (GALDVHVHYI…LPLTKRYFVY (439 aa)). His-400 and His-402 together coordinate Ni(2+). Urea-binding residues include His-402 and Ala-433. Position 483 (Lys-483) interacts with Ni(2+). Position 483 is an N6-carboxylysine (Lys-483). Urea contacts are provided by His-485 and His-512. Residues His-512 and His-538 each coordinate Ni(2+). His-586 serves as the catalytic Proton donor. Asp-626 contacts Ni(2+). Urea is bound at residue Ala-629.

It in the C-terminal section; belongs to the metallo-dependent hydrolases superfamily. Urease alpha subunit family. As to quaternary structure, homohexamer. Requires Ni(2+) as cofactor. Carboxylation allows a single lysine to coordinate two nickel ions.

The enzyme catalyses urea + 2 H2O + H(+) = hydrogencarbonate + 2 NH4(+). The protein operates within nitrogen metabolism; urea degradation; CO(2) and NH(3) from urea (urease route): step 1/1. The urease accessory proteins URE4, URE6 and URE7 are required for urease activity, URE7 supplying nickel for the functional urease. Its function is as follows. Plays a nutritional role via nitrogen acquisition in the environment. Contributes to the central nervous system invasion by enhancing yeast sequestration within microcapillary beds (such as within the brain) during hematogenous spread, thereby facilitating blood-to-brain invasion by C.neoformans. Affects fitness within the mammalian phagosome, promoting non-lytic exocytosis while delaying intracellular replication and thus reducing phagolysosomal membrane damage, events that could facilitate cryptococcal dissemination when transported inside macrophages. Urease activity is also associated with the regulation of key intracellular metabolic pathways, including melanin biosynthesis, polyamine biosynthesis, as well as intracellular levels of proline and reactive oxygen species. The chain is Urease from Cryptococcus neoformans var. neoformans serotype D (strain B-3501A) (Filobasidiella neoformans).